Here is a 75-residue protein sequence, read N- to C-terminus: Small ribosomal subunit protein bS18 (75 aa).

This sequence belongs to the bacterial ribosomal protein bS18 family. In terms of assembly, part of the 30S ribosomal subunit. Forms a tight heterodimer with protein bS6.

In terms of biological role, binds as a heterodimer with protein bS6 to the central domain of the 16S rRNA, where it helps stabilize the platform of the 30S subunit. This is Small ribosomal subunit protein bS18 from Roseobacter denitrificans (strain ATCC 33942 / OCh 114) (Erythrobacter sp. (strain OCh 114)).